A 558-amino-acid polypeptide reads, in one-letter code: Dihydroxy-acid dehydratase (558 aa).

C54 contacts [2Fe-2S] cluster. Residue D86 participates in Mg(2+) binding. C127 is a [2Fe-2S] cluster binding site. 2 residues coordinate Mg(2+): D128 and K129. K129 carries the N6-carboxylysine modification. Position 199 (C199) interacts with [2Fe-2S] cluster. Residue E448 coordinates Mg(2+). The active-site Proton acceptor is the S474.

It belongs to the IlvD/Edd family. Homodimer. Requires [2Fe-2S] cluster as cofactor. The cofactor is Mg(2+).

It carries out the reaction (2R)-2,3-dihydroxy-3-methylbutanoate = 3-methyl-2-oxobutanoate + H2O. The catalysed reaction is (2R,3R)-2,3-dihydroxy-3-methylpentanoate = (S)-3-methyl-2-oxopentanoate + H2O. It participates in amino-acid biosynthesis; L-isoleucine biosynthesis; L-isoleucine from 2-oxobutanoate: step 3/4. Its pathway is amino-acid biosynthesis; L-valine biosynthesis; L-valine from pyruvate: step 3/4. Its function is as follows. Functions in the biosynthesis of branched-chain amino acids. Catalyzes the dehydration of (2R,3R)-2,3-dihydroxy-3-methylpentanoate (2,3-dihydroxy-3-methylvalerate) into 2-oxo-3-methylpentanoate (2-oxo-3-methylvalerate) and of (2R)-2,3-dihydroxy-3-methylbutanoate (2,3-dihydroxyisovalerate) into 2-oxo-3-methylbutanoate (2-oxoisovalerate), the penultimate precursor to L-isoleucine and L-valine, respectively. The polypeptide is Dihydroxy-acid dehydratase (Acidothermus cellulolyticus (strain ATCC 43068 / DSM 8971 / 11B)).